The sequence spans 553 residues: Formate--tetrahydrofolate ligase 2 (553 aa).

63–70 is a binding site for ATP; that stretch reads TSAGEGKS.

Belongs to the formate--tetrahydrofolate ligase family.

The catalysed reaction is (6S)-5,6,7,8-tetrahydrofolate + formate + ATP = (6R)-10-formyltetrahydrofolate + ADP + phosphate. It functions in the pathway one-carbon metabolism; tetrahydrofolate interconversion. The sequence is that of Formate--tetrahydrofolate ligase 2 from Lactobacillus acidophilus (strain ATCC 700396 / NCK56 / N2 / NCFM).